The following is a 239-amino-acid chain: Skn-1 dependent zygotic transcript 1 protein (239 aa).

Functionally, may have a role in mesendoderm development during embryogenesis. The chain is Skn-1 dependent zygotic transcript 1 protein from Caenorhabditis briggsae.